An 810-amino-acid chain; its full sequence is MNSEIKSLPLLPLRGILVFPYMVIHLDVGREKSIQAIEEAMVQDRMIFLATQREAQTDEPTVDDIYNIGTVAEVKQLLKLPGGTIRVLVEGIARAKIEKYEHQDPYFRVEVQQYSEEFEKGAEVEALMRSLVYQFEQYVKLSKRIPPETVVSVVNLEEPGRLADIIASHLALKIEDKQNVLESVEIVDRLEKLCGIVAKELEIVELERKINIRVRKQMEKTQKEYYLREQMKAIQKELGEKDERVAECEEFREKISKAKFPKEAEEKALKEVERLEKMPPMAAEAAVVRNYLDWMLSLPWSKSTKDRIDINAAEEVLEADHYGLKDPKERITEYLAIRKLAKKMKGPILCLVGPPGVGKTSLGRSVARALDRKFVRISLGGVRDEAEIRGHRRTYVGAMPGRVIQGMRTAGSKNPVFLLDEIDKMASDFRGDPSSALLEVLDPEQNSTFSDHYIETPFDLSNVMFITTANNMYSIPRPLLDRMEVIQISGYTEEEKLQIAKRHLMPKQIKDHGLTEEMIQISENTILKVIREYTRESGVRNLERKIASICRKTAKKIVAGQAEKVKVTTQNLEQFLGIPRYRYGVAEQNDEVGTVTGMAWTEVGGDTLVIEVTTYKGTGRMTLTGKLGDVMKESAQAGYSFIRSRAQELGIDQEMFEKWDLHIHIPEGAIPKDGPSAGITMATAMASVLTGRKVRHDIAMTGEITLRGRVLPVGGIKEKVMAAHRAGIKLIILPNDNKKDLEDIPVNIKKQLEFKLVDHIDQVLAIALLEKEVVDTTTVLEPEAAVMDNPHFSAVDSQEVQQQGGTQLPS.

The 194-residue stretch at 8–201 folds into the Lon N-terminal domain; that stretch reads LPLLPLRGIL…KLCGIVAKEL (194 aa). Residue 353-360 coordinates ATP; sequence GPPGVGKT. One can recognise a Lon proteolytic domain in the interval 589 to 770; the sequence is NDEVGTVTGM…DQVLAIALLE (182 aa). Residues S676 and K719 contribute to the active site.

It belongs to the peptidase S16 family. Homohexamer. Organized in a ring with a central cavity.

The protein localises to the cytoplasm. It carries out the reaction Hydrolysis of proteins in presence of ATP.. ATP-dependent serine protease that mediates the selective degradation of mutant and abnormal proteins as well as certain short-lived regulatory proteins. Required for cellular homeostasis and for survival from DNA damage and developmental changes induced by stress. Degrades polypeptides processively to yield small peptide fragments that are 5 to 10 amino acids long. Binds to DNA in a double-stranded, site-specific manner. This Desulforamulus reducens (strain ATCC BAA-1160 / DSM 100696 / MI-1) (Desulfotomaculum reducens) protein is Lon protease.